The chain runs to 178 residues: ATP-dependent protease subunit HslV (178 aa).

Thr-5 is a catalytic residue. The Na(+) site is built by Ser-161, Cys-164, and Thr-167.

Belongs to the peptidase T1B family. HslV subfamily. A double ring-shaped homohexamer of HslV is capped on each side by a ring-shaped HslU homohexamer. The assembly of the HslU/HslV complex is dependent on binding of ATP.

Its subcellular location is the cytoplasm. It carries out the reaction ATP-dependent cleavage of peptide bonds with broad specificity.. With respect to regulation, allosterically activated by HslU binding. Protease subunit of a proteasome-like degradation complex believed to be a general protein degrading machinery. In Syntrophomonas wolfei subsp. wolfei (strain DSM 2245B / Goettingen), this protein is ATP-dependent protease subunit HslV.